The primary structure comprises 103 residues: Large ribosomal subunit protein uL24 (103 aa).

This sequence belongs to the universal ribosomal protein uL24 family. As to quaternary structure, part of the 50S ribosomal subunit.

In terms of biological role, one of two assembly initiator proteins, it binds directly to the 5'-end of the 23S rRNA, where it nucleates assembly of the 50S subunit. Functionally, one of the proteins that surrounds the polypeptide exit tunnel on the outside of the subunit. The sequence is that of Large ribosomal subunit protein uL24 from Alkaliphilus metalliredigens (strain QYMF).